The chain runs to 212 residues: Orotate phosphoribosyltransferase (212 aa).

Position 26 (Lys26) interacts with 5-phospho-alpha-D-ribose 1-diphosphate. Residue Phe34–Phe35 participates in orotate binding. 5-phospho-alpha-D-ribose 1-diphosphate contacts are provided by residues Tyr72–Lys73, Arg98, Lys99, Lys102, His104, and Asp123–Ala131. Positions 127 and 155 each coordinate orotate.

This sequence belongs to the purine/pyrimidine phosphoribosyltransferase family. PyrE subfamily. As to quaternary structure, homodimer. It depends on Mg(2+) as a cofactor.

It catalyses the reaction orotidine 5'-phosphate + diphosphate = orotate + 5-phospho-alpha-D-ribose 1-diphosphate. It functions in the pathway pyrimidine metabolism; UMP biosynthesis via de novo pathway; UMP from orotate: step 1/2. Catalyzes the transfer of a ribosyl phosphate group from 5-phosphoribose 1-diphosphate to orotate, leading to the formation of orotidine monophosphate (OMP). The chain is Orotate phosphoribosyltransferase from Marinobacter nauticus (strain ATCC 700491 / DSM 11845 / VT8) (Marinobacter aquaeolei).